A 1028-amino-acid polypeptide reads, in one-letter code: Kinesin-like protein KIF28 (1028 aa).

Residues 11 to 358 (SVRVAVRVRP…LRYAERAKKV (348 aa)) enclose the Kinesin motor domain. Position 114-121 (114-121 (GQTGSGKS)) interacts with ATP. Residues 460–523 (CDVGRAASNA…LQHLDRIILG (64 aa)) form the FHA domain. The stretch at 873-902 (NQVPELYQKLLKLEQETELLRDVNRALRGE) forms a coiled coil.

It belongs to the TRAFAC class myosin-kinesin ATPase superfamily. Kinesin family.

It is found in the mitochondrion membrane. Microtubule-dependent motor protein required for mitochondrion morphology and transport of mitochondria in neuronal cells. The sequence is that of Kinesin-like protein KIF28 from Mus musculus (Mouse).